A 183-amino-acid chain; its full sequence is TATA box-binding protein-like 1 (183 aa).

Belongs to the TBP family. Binds TFIIA and TFIIB. In terms of tissue distribution, present in the brain, heart, liver and gizzard.

The protein localises to the cytoplasm. It localises to the nucleus. Part of a specialized transcription system that mediates the transcription of most ribosomal proteins through the 5'-TCT-3' motif which is a core promoter element at these genes. Seems to also mediate the transcription of NF1. Does not bind the TATA box. The sequence is that of TATA box-binding protein-like 1 (TBPL1) from Gallus gallus (Chicken).